The sequence spans 231 residues: E3 ubiquitin-protein ligase At3g02290 (231 aa).

Basic and acidic residues predominate over residues 103-118 (GSSHSHEEVEPLRSDS). Residues 103–125 (GSSHSHEEVEPLRSDSDADSESF) form a disordered region. The RING-type; atypical zinc finger occupies 181-222 (CPTCLEEYTSENPKIVTKCSHHFHLSCIYEWMERSENCPVCG).

It localises to the cytoplasm. It carries out the reaction S-ubiquitinyl-[E2 ubiquitin-conjugating enzyme]-L-cysteine + [acceptor protein]-L-lysine = [E2 ubiquitin-conjugating enzyme]-L-cysteine + N(6)-ubiquitinyl-[acceptor protein]-L-lysine.. It participates in protein modification; protein ubiquitination. In terms of biological role, mediates E2-dependent protein ubiquitination. This is E3 ubiquitin-protein ligase At3g02290 from Arabidopsis thaliana (Mouse-ear cress).